A 317-amino-acid chain; its full sequence is Tyrosine--tRNA ligase (317 aa).

An L-tyrosine-binding site is contributed by Tyr-33. Positions 38–46 (PSGKIHMGH) match the 'HIGH' region motif. Residues Tyr-155, Gln-159, Asp-162, and Gln-177 each coordinate L-tyrosine. The short motif at 211-215 (KMASS) is the 'KMSKS' region element. Ser-214 provides a ligand contact to ATP.

This sequence belongs to the class-I aminoacyl-tRNA synthetase family. TyrS type 3 subfamily. As to quaternary structure, homodimer.

The protein localises to the cytoplasm. It catalyses the reaction tRNA(Tyr) + L-tyrosine + ATP = L-tyrosyl-tRNA(Tyr) + AMP + diphosphate + H(+). Functionally, catalyzes the attachment of tyrosine to tRNA(Tyr) in a two-step reaction: tyrosine is first activated by ATP to form Tyr-AMP and then transferred to the acceptor end of tRNA(Tyr). This is Tyrosine--tRNA ligase from Methanosarcina mazei (strain ATCC BAA-159 / DSM 3647 / Goe1 / Go1 / JCM 11833 / OCM 88) (Methanosarcina frisia).